We begin with the raw amino-acid sequence, 185 residues long: Ribosome-recycling factor (185 aa).

The protein belongs to the RRF family.

It localises to the cytoplasm. In terms of biological role, responsible for the release of ribosomes from messenger RNA at the termination of protein biosynthesis. May increase the efficiency of translation by recycling ribosomes from one round of translation to another. The chain is Ribosome-recycling factor from Mycolicibacterium vanbaalenii (strain DSM 7251 / JCM 13017 / BCRC 16820 / KCTC 9966 / NRRL B-24157 / PYR-1) (Mycobacterium vanbaalenii).